The following is a 162-amino-acid chain: Sec-independent protein translocase protein TatB (162 aa).

A helical transmembrane segment spans residues 1–21 (MFDIGFLEIIVIMVIALIVIG). Residues 86–162 (IQDEFGIDQE…ESTPESSNKS (77 aa)) form a disordered region. A compositionally biased stretch (polar residues) spans 108 to 117 (FSGTQFNKAP). The segment covering 123–135 (PTTEESPSSTPET) has biased composition (low complexity). Positions 147 to 162 (DVSAPSESTPESSNKS) are enriched in polar residues.

It belongs to the TatB family. In terms of assembly, the Tat system comprises two distinct complexes: a TatABC complex, containing multiple copies of TatA, TatB and TatC subunits, and a separate TatA complex, containing only TatA subunits. Substrates initially bind to the TatABC complex, which probably triggers association of the separate TatA complex to form the active translocon.

The protein resides in the cell inner membrane. Part of the twin-arginine translocation (Tat) system that transports large folded proteins containing a characteristic twin-arginine motif in their signal peptide across membranes. Together with TatC, TatB is part of a receptor directly interacting with Tat signal peptides. TatB may form an oligomeric binding site that transiently accommodates folded Tat precursor proteins before their translocation. The sequence is that of Sec-independent protein translocase protein TatB from Hydrogenovibrio crunogenus (strain DSM 25203 / XCL-2) (Thiomicrospira crunogena).